Consider the following 331-residue polypeptide: Phenylalanine--tRNA ligase alpha subunit (331 aa).

Glu256 provides a ligand contact to Mg(2+).

It belongs to the class-II aminoacyl-tRNA synthetase family. Phe-tRNA synthetase alpha subunit type 1 subfamily. In terms of assembly, tetramer of two alpha and two beta subunits. It depends on Mg(2+) as a cofactor.

Its subcellular location is the cytoplasm. It carries out the reaction tRNA(Phe) + L-phenylalanine + ATP = L-phenylalanyl-tRNA(Phe) + AMP + diphosphate + H(+). This chain is Phenylalanine--tRNA ligase alpha subunit, found in Colwellia psychrerythraea (strain 34H / ATCC BAA-681) (Vibrio psychroerythus).